A 217-amino-acid polypeptide reads, in one-letter code: Small ribosomal subunit protein uS3c (217 aa).

The KH type-2 domain occupies I43–A117.

It belongs to the universal ribosomal protein uS3 family. As to quaternary structure, part of the 30S ribosomal subunit.

The protein resides in the plastid. It is found in the chloroplast. The protein is Small ribosomal subunit protein uS3c (rps3) of Platanus occidentalis (Sycamore).